Consider the following 64-residue polypeptide: Large ribosomal subunit protein bL35c (64 aa).

It belongs to the bacterial ribosomal protein bL35 family.

Its subcellular location is the plastid. The protein localises to the chloroplast. This Thalassiosira pseudonana (Marine diatom) protein is Large ribosomal subunit protein bL35c.